Here is a 715-residue protein sequence, read N- to C-terminus: Polyribonucleotide nucleotidyltransferase (715 aa).

Residues aspartate 485 and aspartate 491 each coordinate Mg(2+). Residues 552–611 enclose the KH domain; the sequence is PRIHTMKIDPKKIKDVIGKGGAVIRALTEETGTSIDIDDDGTVKIAATDNNAAKAVMARI. Residues 621 to 689 form the S1 motif domain; sequence NAIYKGKVTR…RQNRIRLTMK (69 aa). Residues 695–715 are disordered; sequence TPVAENVTEEAEVSSEQQAEI.

Belongs to the polyribonucleotide nucleotidyltransferase family. In terms of assembly, component of the RNA degradosome, which is a multiprotein complex involved in RNA processing and mRNA degradation. The cofactor is Mg(2+).

Its subcellular location is the cytoplasm. The catalysed reaction is RNA(n+1) + phosphate = RNA(n) + a ribonucleoside 5'-diphosphate. Its function is as follows. Involved in mRNA degradation. Catalyzes the phosphorolysis of single-stranded polyribonucleotides processively in the 3'- to 5'-direction. The sequence is that of Polyribonucleotide nucleotidyltransferase from Actinobacillus pleuropneumoniae serotype 7 (strain AP76).